A 296-amino-acid polypeptide reads, in one-letter code: 4-hydroxybenzoate octaprenyltransferase (296 aa).

A run of 9 helical transmembrane segments spans residues 29-49 (IGIY…AEGV), 55-75 (LFIF…INDY), 102-122 (ALVL…FTNA), 124-141 (TIWL…YPFM), 146-166 (FYPQ…AFTA), 169-189 (GSLP…TVAY), 216-236 (ADRL…LLAG), 239-259 (FELG…FVWE), and 271-291 (CFNA…GIVL).

It belongs to the UbiA prenyltransferase family. It depends on Mg(2+) as a cofactor.

The protein localises to the cell inner membrane. It carries out the reaction all-trans-octaprenyl diphosphate + 4-hydroxybenzoate = 4-hydroxy-3-(all-trans-octaprenyl)benzoate + diphosphate. It functions in the pathway cofactor biosynthesis; ubiquinone biosynthesis. In terms of biological role, catalyzes the prenylation of para-hydroxybenzoate (PHB) with an all-trans polyprenyl group. Mediates the second step in the final reaction sequence of ubiquinone-8 (UQ-8) biosynthesis, which is the condensation of the polyisoprenoid side chain with PHB, generating the first membrane-bound Q intermediate 3-octaprenyl-4-hydroxybenzoate. This is 4-hydroxybenzoate octaprenyltransferase from Ectopseudomonas mendocina (strain ymp) (Pseudomonas mendocina).